The sequence spans 507 residues: Maturase K (507 aa).

This sequence belongs to the intron maturase 2 family. MatK subfamily.

It localises to the plastid. Its subcellular location is the chloroplast. Its function is as follows. Usually encoded in the trnK tRNA gene intron. Probably assists in splicing its own and other chloroplast group II introns. The polypeptide is Maturase K (Araucaria heterophylla (Norfolk Island pine)).